The following is an 89-amino-acid chain: Small ribosomal subunit protein uS19 (89 aa).

This sequence belongs to the universal ribosomal protein uS19 family.

In terms of biological role, protein S19 forms a complex with S13 that binds strongly to the 16S ribosomal RNA. The sequence is that of Small ribosomal subunit protein uS19 from Xylella fastidiosa (strain M23).